The following is a 129-amino-acid chain: Lysozyme C (129 aa).

The C-type lysozyme domain maps to 1–129; sequence KIYTRCELAA…VSKWIKDCKL (129 aa). Disulfide bonds link Cys6/Cys127, Cys30/Cys115, Cys64/Cys80, and Cys76/Cys94. Residues Glu35 and Asp52 contribute to the active site.

The protein belongs to the glycosyl hydrolase 22 family. In terms of assembly, monomer.

Its subcellular location is the secreted. The enzyme catalyses Hydrolysis of (1-&gt;4)-beta-linkages between N-acetylmuramic acid and N-acetyl-D-glucosamine residues in a peptidoglycan and between N-acetyl-D-glucosamine residues in chitodextrins.. Functionally, lysozymes have primarily a bacteriolytic function; those in tissues and body fluids are associated with the monocyte-macrophage system and enhance the activity of immunoagents. This chain is Lysozyme C (LYZ), found in Crax fasciolata (Bare-faced curassow).